A 492-amino-acid chain; its full sequence is N-succinylglutamate 5-semialdehyde dehydrogenase (492 aa).

220–225 is an NAD(+) binding site; it reads GSANTG. Active-site residues include glutamate 243 and cysteine 277.

This sequence belongs to the aldehyde dehydrogenase family. AstD subfamily.

The catalysed reaction is N-succinyl-L-glutamate 5-semialdehyde + NAD(+) + H2O = N-succinyl-L-glutamate + NADH + 2 H(+). It participates in amino-acid degradation; L-arginine degradation via AST pathway; L-glutamate and succinate from L-arginine: step 4/5. Its function is as follows. Catalyzes the NAD-dependent reduction of succinylglutamate semialdehyde into succinylglutamate. The protein is N-succinylglutamate 5-semialdehyde dehydrogenase of Escherichia coli O9:H4 (strain HS).